A 514-amino-acid chain; its full sequence is 2,3-bisphosphoglycerate-independent phosphoglycerate mutase (514 aa).

Residues Asp14 and Ser64 each coordinate Mn(2+). Catalysis depends on Ser64, which acts as the Phosphoserine intermediate. Substrate-binding positions include His125, 155 to 156 (RD), Arg187, Arg193, 263 to 266 (RADR), and Lys336. Mn(2+) contacts are provided by Asp403, His407, Asp444, His445, and His463.

The protein belongs to the BPG-independent phosphoglycerate mutase family. As to quaternary structure, monomer. Requires Mn(2+) as cofactor.

It carries out the reaction (2R)-2-phosphoglycerate = (2R)-3-phosphoglycerate. The protein operates within carbohydrate degradation; glycolysis; pyruvate from D-glyceraldehyde 3-phosphate: step 3/5. Its function is as follows. Catalyzes the interconversion of 2-phosphoglycerate and 3-phosphoglycerate. The sequence is that of 2,3-bisphosphoglycerate-independent phosphoglycerate mutase from Escherichia coli (strain ATCC 8739 / DSM 1576 / NBRC 3972 / NCIMB 8545 / WDCM 00012 / Crooks).